We begin with the raw amino-acid sequence, 292 residues long: NAD kinase (292 aa).

The Proton acceptor role is filled by D73. NAD(+) is bound by residues 73–74 (DG), 147–148 (NE), H158, R175, D177, 188–193 (TAYSLS), and Q247.

The protein belongs to the NAD kinase family. The cofactor is a divalent metal cation.

It is found in the cytoplasm. The enzyme catalyses NAD(+) + ATP = ADP + NADP(+) + H(+). Its function is as follows. Involved in the regulation of the intracellular balance of NAD and NADP, and is a key enzyme in the biosynthesis of NADP. Catalyzes specifically the phosphorylation on 2'-hydroxyl of the adenosine moiety of NAD to yield NADP. This chain is NAD kinase, found in Klebsiella pneumoniae subsp. pneumoniae (strain ATCC 700721 / MGH 78578).